Here is a 243-residue protein sequence, read N- to C-terminus: UPF0246 protein Sez_1855 (243 aa).

It belongs to the UPF0246 family.

The protein is UPF0246 protein Sez_1855 of Streptococcus equi subsp. zooepidemicus (strain MGCS10565).